The primary structure comprises 348 residues: Large ribosomal subunit protein uL10 (348 aa).

A disordered region spans residues 291 to 348 (LPEELRGVSAADTGAAEEEESTDEEAADADQADAAEDDDAADDDGDDEDAGDALGSLF). Acidic residues predominate over residues 305 to 341 (AAEEEESTDEEAADADQADAAEDDDAADDDGDDEDAG).

This sequence belongs to the universal ribosomal protein uL10 family. As to quaternary structure, part of the 50S ribosomal subunit. Forms part of the ribosomal stalk which helps the ribosome interact with GTP-bound translation factors. Forms a heptameric L10(L12)2(L12)2(L12)2 complex, where L10 forms an elongated spine to which the L12 dimers bind in a sequential fashion.

Its function is as follows. Forms part of the ribosomal stalk, playing a central role in the interaction of the ribosome with GTP-bound translation factors. This Haloferax volcanii (strain ATCC 29605 / DSM 3757 / JCM 8879 / NBRC 14742 / NCIMB 2012 / VKM B-1768 / DS2) (Halobacterium volcanii) protein is Large ribosomal subunit protein uL10.